We begin with the raw amino-acid sequence, 336 residues long: Fructose-1,6-bisphosphatase class 1 (336 aa).

The Mg(2+) site is built by E90, D112, L114, and D115. Residues 115-118 (DGSS), N207, and K273 contribute to the substrate site. Position 279 (E279) interacts with Mg(2+).

This sequence belongs to the FBPase class 1 family. In terms of assembly, homotetramer. It depends on Mg(2+) as a cofactor.

It is found in the cytoplasm. The catalysed reaction is beta-D-fructose 1,6-bisphosphate + H2O = beta-D-fructose 6-phosphate + phosphate. It participates in carbohydrate biosynthesis; gluconeogenesis. The sequence is that of Fructose-1,6-bisphosphatase class 1 from Xanthomonas euvesicatoria pv. vesicatoria (strain 85-10) (Xanthomonas campestris pv. vesicatoria).